The sequence spans 327 residues: Probable NAD(P)H-dependent D-xylose reductase xyl1 (327 aa).

Tyrosine 57 functions as the Proton donor in the catalytic mechanism. Histidine 119 lines the substrate pocket. NAD(+) contacts are provided by residues 173–174, 222–231, and 278–288; these read SN, SSLGPQSFIE, and KSNNPDRLAQN.

It belongs to the aldo/keto reductase family.

It catalyses the reaction xylitol + NAD(+) = D-xylose + NADH + H(+). The enzyme catalyses xylitol + NADP(+) = D-xylose + NADPH + H(+). It functions in the pathway carbohydrate metabolism; D-xylose degradation. Its function is as follows. Catalyzes the initial reaction in the xylose utilization pathway by reducing D-xylose into xylitol. Xylose is a major component of hemicelluloses such as xylan. Most fungi utilize D-xylose via three enzymatic reactions, xylose reductase (XR), xylitol dehydrogenase (XDH), and xylulokinase, to form xylulose 5-phosphate, which enters pentose phosphate pathway. This chain is Probable NAD(P)H-dependent D-xylose reductase xyl1 (xyl1), found in Arthroderma otae (strain ATCC MYA-4605 / CBS 113480) (Microsporum canis).